Reading from the N-terminus, the 630-residue chain is Conserved oligomeric Golgi complex subunit 6 (630 aa).

Belongs to the COG6 family. As to quaternary structure, component of the conserved oligomeric Golgi complex which is composed of eight different subunits and is required for normal Golgi morphology and localization.

Its subcellular location is the golgi apparatus membrane. Functionally, required for normal Golgi function. This Drosophila melanogaster (Fruit fly) protein is Conserved oligomeric Golgi complex subunit 6.